Here is a 965-residue protein sequence, read N- to C-terminus: Valine--tRNA ligase (965 aa).

Over residues 1 to 12 (MEKTPATQTQAE) the composition is skewed to polar residues. A disordered region spans residues 1-23 (MEKTPATQTQAEPSLDKTYNPKE). Residues 56 to 66 (PNVTGSLHMGH) carry the 'HIGH' region motif. A 'KMSKS' region motif is present at residues 568–572 (KMSKS). K571 contributes to the ATP binding site. Residues 893–960 (MAGLVDKEAE…SKEKLLAQKE (68 aa)) are a coiled coil.

This sequence belongs to the class-I aminoacyl-tRNA synthetase family. ValS type 1 subfamily. Monomer.

The protein resides in the cytoplasm. The enzyme catalyses tRNA(Val) + L-valine + ATP = L-valyl-tRNA(Val) + AMP + diphosphate. Its function is as follows. Catalyzes the attachment of valine to tRNA(Val). As ValRS can inadvertently accommodate and process structurally similar amino acids such as threonine, to avoid such errors, it has a 'posttransfer' editing activity that hydrolyzes mischarged Thr-tRNA(Val) in a tRNA-dependent manner. The chain is Valine--tRNA ligase from Photorhabdus laumondii subsp. laumondii (strain DSM 15139 / CIP 105565 / TT01) (Photorhabdus luminescens subsp. laumondii).